A 232-amino-acid chain; its full sequence is Noggin (232 aa).

The signal sequence occupies residues Met-1–Gly-27. A glycan (N-linked (GlcNAc...) asparagine) is linked at Asn-62. Positions Gly-77–Gly-96 are disordered. 4 cysteine pairs are disulfide-bonded: Cys-155–Cys-192, Cys-178–Cys-228, Cys-184–Cys-230, and Cys-207–Cys-215.

This sequence belongs to the noggin family. As to quaternary structure, homodimer. Interacts with GDF5; inhibits chondrocyte differentiation.

It localises to the secreted. Inhibitor of bone morphogenetic proteins (BMP) signaling which is required for growth and patterning of the neural tube and somite. Essential for cartilage morphogenesis and joint formation. Inhibits chondrocyte differentiation through its interaction with GDF5 and, probably, GDF6. The polypeptide is Noggin (NOG) (Homo sapiens (Human)).